A 563-amino-acid polypeptide reads, in one-letter code: MNTKELIASELSSIIDSLDQEAILKLLETPKNSEMGDIAFPAFSLAKVERKAPQMIAAELAEKMNSQAFEKVVATGPYVNFFLDKSAISAQVLQAVTTEKEHYADQNIGKQENVVIDMSSPNIAKPFSIGHLRSTVIGDSLSHIFQKIGYQTVKVNHLGDWGKQFGMLIVAYKKWGDEEAVKAHPIDELLKLYVRINAEAENDPSLDEEAREWFRKLENGDEEALALWQWFRDESLVEFNRLYNELKVEFDSYNGEAFYNDKMDAVVDILSEKGLLLESEGAQVVNLEKYGIEHPALIKKSDGATLYITRDLAAALYRKNEYQFAKSIYVVGQEQSAHFKQLKAVLQEMGYDWSDDITHVPFGLVTKEGKKLSTRKGNVILLEPTIAEAVSRAKVQIEAKNPELENKDQVAHAVGVGAIKFYDLKTDRTNGYDFDLEAMVSFEGETGPYVQYAYARIQSILRKADFKPETSGNYSLNDTESWEIIKLIQDFPRIINRAADNFEPSIIAKFAISLAQSFNKYYAHTRILDESPERDSRLALSYATAVVLKEALRLLGVEAPEKM.

The 'HIGH' region signature appears at 121–131 (PNIAKPFSIGH).

This sequence belongs to the class-I aminoacyl-tRNA synthetase family. In terms of assembly, monomer.

It localises to the cytoplasm. The catalysed reaction is tRNA(Arg) + L-arginine + ATP = L-arginyl-tRNA(Arg) + AMP + diphosphate. The polypeptide is Arginine--tRNA ligase (Streptococcus pneumoniae (strain CGSP14)).